A 119-amino-acid polypeptide reads, in one-letter code: Beta-2-microglobulin (119 aa).

The N-terminal stretch at 1 to 20 (MSRSVALAVLALLSLSGLEA) is a signal peptide. The 90-residue stretch at 25–114 (PKIQVYSRHP…VTLSGPRTVK (90 aa)) folds into the Ig-like C1-type domain. Cysteine 45 and cysteine 100 form a disulfide bridge.

The protein belongs to the beta-2-microglobulin family. Heterodimer of an alpha chain and a beta chain. Beta-2-microglobulin is the beta-chain of major histocompatibility complex class I molecules.

The protein localises to the secreted. In terms of biological role, component of the class I major histocompatibility complex (MHC). Involved in the presentation of peptide antigens to the immune system. The sequence is that of Beta-2-microglobulin (B2M) from Papio anubis (Olive baboon).